A 384-amino-acid chain; its full sequence is ATP phosphoribosyltransferase regulatory subunit (384 aa).

The protein belongs to the class-II aminoacyl-tRNA synthetase family. HisZ subfamily. In terms of assembly, heteromultimer composed of HisG and HisZ subunits.

It is found in the cytoplasm. It functions in the pathway amino-acid biosynthesis; L-histidine biosynthesis; L-histidine from 5-phospho-alpha-D-ribose 1-diphosphate: step 1/9. Required for the first step of histidine biosynthesis. May allow the feedback regulation of ATP phosphoribosyltransferase activity by histidine. The protein is ATP phosphoribosyltransferase regulatory subunit of Rhodospirillum rubrum (strain ATCC 11170 / ATH 1.1.1 / DSM 467 / LMG 4362 / NCIMB 8255 / S1).